A 173-amino-acid polypeptide reads, in one-letter code: Co-chaperone protein HscB homolog (173 aa).

Positions 2–74 (NYFELFSLSP…ISRAEHMLSL (73 aa)) constitute a J domain.

This sequence belongs to the HscB family. Interacts with HscA and stimulates its ATPase activity.

Its function is as follows. Co-chaperone involved in the maturation of iron-sulfur cluster-containing proteins. Seems to help targeting proteins to be folded toward HscA. The sequence is that of Co-chaperone protein HscB homolog from Shewanella loihica (strain ATCC BAA-1088 / PV-4).